Reading from the N-terminus, the 498-residue chain is Type VI secretion system sheath protein TssC1 (498 aa).

Forms a heterodimer with TssB1. Heterodimers assemble to form the sheath of the T6SS machinery. Interacts with TssA1.

In terms of biological role, core component of the H1 type VI (H1-T6SS) secretion system that plays a role in the release of toxins targeting both eukaryotic and prokaryotic species. Forms the sheath of the structure by assembling into tubules together with TssB1 resulting in the stacking of cogwheel-like structures showing predominantly a 12-fold symmetry. The sheath contracts to provide the energy needed for effector delivery. This chain is Type VI secretion system sheath protein TssC1, found in Pseudomonas aeruginosa (strain ATCC 15692 / DSM 22644 / CIP 104116 / JCM 14847 / LMG 12228 / 1C / PRS 101 / PAO1).